Reading from the N-terminus, the 237-residue chain is 2-C-methyl-D-erythritol 4-phosphate cytidylyltransferase (237 aa).

It belongs to the IspD/TarI cytidylyltransferase family. IspD subfamily.

The enzyme catalyses 2-C-methyl-D-erythritol 4-phosphate + CTP + H(+) = 4-CDP-2-C-methyl-D-erythritol + diphosphate. The protein operates within isoprenoid biosynthesis; isopentenyl diphosphate biosynthesis via DXP pathway; isopentenyl diphosphate from 1-deoxy-D-xylulose 5-phosphate: step 2/6. Catalyzes the formation of 4-diphosphocytidyl-2-C-methyl-D-erythritol from CTP and 2-C-methyl-D-erythritol 4-phosphate (MEP). This chain is 2-C-methyl-D-erythritol 4-phosphate cytidylyltransferase, found in Vibrio vulnificus (strain YJ016).